The following is a 145-amino-acid chain: Leghemoglobin-2 (145 aa).

A Globin domain is found at 3 to 145 (AFSDKQEGLV…ELAAAIKKAY (143 aa)). Nitrated tyrosine occurs at positions 26 and 31. Ser46 lines the heme b pocket. The residue at position 46 (Ser46) is a Phosphoserine. Residue His62 coordinates O2. Lys65, His93, and Lys96 together coordinate heme b. Tyr134 is subject to Nitrated tyrosine.

It belongs to the plant globin family. In terms of assembly, monomer. Nitrated in effective nodules and particularly in hypoxic conditions; this mechanism may play a protective role in the symbiosis by buffering toxic peroxynitrite NO(2)(-). Nitration level decrease during nodule senescence. In terms of processing, phosphorylation at Ser-46 disrupts the molecular environment of its porphyrin ring oxygen binding pocket, thus leading to a reduced oxygen consumption and to the delivery of oxygen O(2) to symbiosomes. In terms of tissue distribution, root nodules.

The protein resides in the cytoplasm. Its subcellular location is the cytosol. It localises to the nucleus. Its function is as follows. Leghemoglobin that reversibly binds oxygen O(2) through a pentacoordinated heme iron. In root nodules, facilitates the diffusion of oxygen to the bacteroids while preventing the bacterial nitrogenase from being inactivated by buffering dioxygen, nitric oxide and carbon monoxide, and promoting the formation of reactive oxygen species (ROS, e.g. H(2)O(2)). This role is essential for symbiotic nitrogen fixation (SNF). This chain is Leghemoglobin-2, found in Vigna unguiculata (Cowpea).